Consider the following 461-residue polypeptide: UDP-N-acetylmuramoylalanine--D-glutamate ligase (461 aa).

An ATP-binding site is contributed by G117–T123.

Belongs to the MurCDEF family.

The protein localises to the cytoplasm. It catalyses the reaction UDP-N-acetyl-alpha-D-muramoyl-L-alanine + D-glutamate + ATP = UDP-N-acetyl-alpha-D-muramoyl-L-alanyl-D-glutamate + ADP + phosphate + H(+). It participates in cell wall biogenesis; peptidoglycan biosynthesis. Its function is as follows. Cell wall formation. Catalyzes the addition of glutamate to the nucleotide precursor UDP-N-acetylmuramoyl-L-alanine (UMA). This is UDP-N-acetylmuramoylalanine--D-glutamate ligase from Synechococcus sp. (strain CC9605).